The sequence spans 308 residues: Acetyl-coenzyme A carboxylase carboxyl transferase subunit beta (308 aa).

Residues 26–295 (LWIKDPETGE…EQKPLEPEIL (270 aa)) enclose the CoA carboxyltransferase N-terminal domain.

The protein belongs to the AccD/PCCB family. Acetyl-CoA carboxylase is a heterohexamer composed of biotin carboxyl carrier protein (AccB), biotin carboxylase (AccC) and two subunits each of ACCase subunit alpha (AccA) and ACCase subunit beta (AccD).

It is found in the cytoplasm. The catalysed reaction is N(6)-carboxybiotinyl-L-lysyl-[protein] + acetyl-CoA = N(6)-biotinyl-L-lysyl-[protein] + malonyl-CoA. Its pathway is lipid metabolism; malonyl-CoA biosynthesis; malonyl-CoA from acetyl-CoA: step 1/1. Functionally, component of the acetyl coenzyme A carboxylase (ACC) complex. Biotin carboxylase (BC) catalyzes the carboxylation of biotin on its carrier protein (BCCP) and then the CO(2) group is transferred by the transcarboxylase to acetyl-CoA to form malonyl-CoA. The polypeptide is Acetyl-coenzyme A carboxylase carboxyl transferase subunit beta (Mesorhizobium japonicum (strain LMG 29417 / CECT 9101 / MAFF 303099) (Mesorhizobium loti (strain MAFF 303099))).